The chain runs to 60 residues: Metallothionein A (60 aa).

The segment at 1–28 is beta; the sequence is MDPCECSKTGKCNCGTSCTCTNCSCKCC. A divalent metal cation-binding residues include cysteine 4, cysteine 6, cysteine 12, cysteine 14, cysteine 18, cysteine 20, cysteine 23, cysteine 25, cysteine 28, cysteine 32, cysteine 33, cysteine 35, cysteine 36, cysteine 40, cysteine 43, cysteine 47, cysteine 49, cysteine 54, cysteine 58, and cysteine 59. The tract at residues 29–60 is alpha; sequence KKSCCSCCPSGCSKCASGCVCKGNSCDKSCCQ.

Belongs to the metallothionein superfamily. Type 1 family.

Metallothioneins have a high content of cysteine residues that bind various heavy metals. The protein is Metallothionein A (mta) of Cyprinodon sp. (Pupfish).